The following is a 103-amino-acid chain: Cystatin-A8 (103 aa).

Residues 1–20 (MESEEMLAGGLTEPRPATPE) form a disordered region. The Secondary area of contact motif lies at 51-55 (QVVAG).

It belongs to the cystatin family.

The protein resides in the cytoplasm. In terms of biological role, this is an intracellular thiol proteinase inhibitor. This chain is Cystatin-A8, found in Sus scrofa (Pig).